A 545-amino-acid chain; its full sequence is CTP synthase (545 aa).

Positions 1–266 (MTTNYIFVTG…DDYICKRFSL (266 aa)) are amidoligase domain. Position 14 (serine 14) interacts with CTP. Serine 14 contacts UTP. ATP-binding positions include 15-20 (SLGKGI) and aspartate 72. Mg(2+) contacts are provided by aspartate 72 and glutamate 140. Residues 147 to 149 (DIE), 187 to 192 (KTKPTQ), and lysine 223 contribute to the CTP site. Residues 187 to 192 (KTKPTQ) and lysine 223 each bind UTP. ATP is bound at residue 239-241 (KDV). One can recognise a Glutamine amidotransferase type-1 domain in the interval 291–542 (TIGMVGKYIE…VKAASEYQKR (252 aa)). Residue glycine 352 coordinates L-glutamine. Cysteine 379 acts as the Nucleophile; for glutamine hydrolysis in catalysis. Residues 380 to 383 (LGMQ), glutamate 403, and arginine 470 contribute to the L-glutamine site. Catalysis depends on residues histidine 515 and glutamate 517.

Belongs to the CTP synthase family. Homotetramer.

It carries out the reaction UTP + L-glutamine + ATP + H2O = CTP + L-glutamate + ADP + phosphate + 2 H(+). The enzyme catalyses L-glutamine + H2O = L-glutamate + NH4(+). The catalysed reaction is UTP + NH4(+) + ATP = CTP + ADP + phosphate + 2 H(+). It functions in the pathway pyrimidine metabolism; CTP biosynthesis via de novo pathway; CTP from UDP: step 2/2. Allosterically activated by GTP, when glutamine is the substrate; GTP has no effect on the reaction when ammonia is the substrate. The allosteric effector GTP functions by stabilizing the protein conformation that binds the tetrahedral intermediate(s) formed during glutamine hydrolysis. Inhibited by the product CTP, via allosteric rather than competitive inhibition. Its function is as follows. Catalyzes the ATP-dependent amination of UTP to CTP with either L-glutamine or ammonia as the source of nitrogen. Regulates intracellular CTP levels through interactions with the four ribonucleotide triphosphates. This is CTP synthase from Klebsiella pneumoniae subsp. pneumoniae (strain ATCC 700721 / MGH 78578).